Here is a 254-residue protein sequence, read N- to C-terminus: Ribonuclease HII (254 aa).

The 185-residue stretch at 70-254 folds into the RNase H type-2 domain; the sequence is QAIAGIDEVG…TFEPIKSMYE (185 aa). Residues Asp-76, Glu-77, and Asp-168 each contribute to the a divalent metal cation site.

This sequence belongs to the RNase HII family. The cofactor is Mn(2+). It depends on Mg(2+) as a cofactor.

It is found in the cytoplasm. The enzyme catalyses Endonucleolytic cleavage to 5'-phosphomonoester.. Endonuclease that specifically degrades the RNA of RNA-DNA hybrids. The protein is Ribonuclease HII of Streptococcus sanguinis (strain SK36).